Here is a 567-residue protein sequence, read N- to C-terminus: Arginine--tRNA ligase (567 aa).

The 'HIGH' region motif lies at 121–131 (ANPNGPLHVGH).

It belongs to the class-I aminoacyl-tRNA synthetase family.

It localises to the cytoplasm. It catalyses the reaction tRNA(Arg) + L-arginine + ATP = L-arginyl-tRNA(Arg) + AMP + diphosphate. In Methanosarcina acetivorans (strain ATCC 35395 / DSM 2834 / JCM 12185 / C2A), this protein is Arginine--tRNA ligase.